A 728-amino-acid chain; its full sequence is Microtubule-associated protein VP5 (728 aa).

This sequence belongs to the reoviridae microtubule-associated protein family.

The protein resides in the virion. It localises to the host cytoplasm. It is found in the host cytoskeleton. Minor inner capsid component. Displays NTPase and RNA 5'-triphosphatase (RTPase) activities. May function as a cofactor of polymerase. Associates with microtubules and plays a role in the formation, structural organization and morphology of viral inclusions, where the assembly of cores and the replication of viral RNA occur. The chain is Microtubule-associated protein VP5 (S5) from Ctenopharyngodon idella (Grass carp).